Here is a 624-residue protein sequence, read N- to C-terminus: MNKSLRFSHKILLAASLIVILAFSLFTLYNDYLQRNAIREDLENYLAEMGASTSTNIRNLFEGRIKLVENLAQNIAQDPANAETLMGQNALISSFLTVYLGKVDGGFSVRPDAKMPDGYDPRTRPWYKDGMNASGATLTEPYIDMTTNKMVIGILSKVSSSVGVVGGDLALDGLVQIINSLNFGGMGYAFLVNDQGKILVHPDKDLVMKSLSDLFPQHTPKLTGELTEVQSDGQTRLLTFSPITGLPSANWYIGLSVDKDKAFSMLSTFRTSAVIATVVAVVIIIGLLGLLIRVLMQPLHTMTRAMEDIAEGEGDLTKRLHIHSHDEFGVLGNAFNRFVERIHSSIREVSSATEQVNEVALRVISASNSSMTNSDEQSNRTNSVAAAINELGAAAQEIAGNAAQASQHASSARLLAEEGQQVVERNIAAMNRLSDLIVTSSAHIETLNSKTVNIGQILEVITSISQQTNLLALNAAIEAARAGEAGRGFAVVADEVRNLAHRTQESAQQVQTMIEELQVGARESVDTMEQSQRHSQDSMQIANQAGERLDSVTVRIGEIDGMNQSVATATEEQTAVVEAINMDINEINMLNQEGVENLQATLRACSDLEQQAGRLKHLVGSFRI.

Residues 11-31 form a helical membrane-spanning segment; the sequence is ILLAASLIVILAFSLFTLYND. One can recognise a Cache domain in the interval 36 to 254; sequence NAIREDLENY…GLPSANWYIG (219 aa). The chain crosses the membrane as a helical span at residues 272–292; sequence SAVIATVVAVVIIIGLLGLLI. One can recognise an HAMP domain in the interval 293–347; that stretch reads RVLMQPLHTMTRAMEDIAEGEGDLTKRLHIHSHDEFGVLGNAFNRFVERIHSSIR. The Methyl-accepting transducer domain occupies 352–588; sequence ATEQVNEVAL…AINMDINEIN (237 aa).

The protein belongs to the methyl-accepting chemotaxis (MCP) protein family.

The protein resides in the cell membrane. Chemotactic-signal transducers respond to changes in the concentration of attractants and repellents in the environment, transduce a signal from the outside to the inside of the cell, and facilitate sensory adaptation through the variation of the level of methylation. McpG is a specific gamma-aminobutyric acid (GABA) chemoreceptor that recognizes GABA over a wide range of environmental conditions. Contributes to attraction to and colonization of plant roots. This is Methyl-accepting chemotaxis protein McpG from Pseudomonas putida (strain ATCC 47054 / DSM 6125 / CFBP 8728 / NCIMB 11950 / KT2440).